A 470-amino-acid polypeptide reads, in one-letter code: Acetyl-CoA decarbonylase/synthase complex subunit gamma 1 (470 aa).

The 4Fe-4S domain occupies 1–60 (MKINSPLEAYKYLPQTNCGECGQPTCMAFASTLIDRSGKTTDCPPLIKEKKFAKKLAELD). The [4Fe-4S] cluster site is built by Cys-18, Cys-21, Cys-26, and Cys-43.

In terms of assembly, heterodimer of delta and gamma chains. The ACDS complex is made up of alpha, epsilon, beta, gamma and delta chains with a probable stoichiometry of (alpha(2)epsilon(2))(4)-beta(8)-(gamma(1)delta(1))(8). Requires corrinoid as cofactor. It depends on [4Fe-4S] cluster as a cofactor.

It carries out the reaction 5,6,7,8-tetrahydrosarcinapterin + methyl-Co(III)-[corrinoid Fe-S protein] = 5-methyltetrahydrosarcinapterin + Co(I)-[corrinoid Fe-S protein] + H(+). The protein operates within one-carbon metabolism; methanogenesis from acetate. Functionally, part of a complex that catalyzes the reversible cleavage of acetyl-CoA, allowing growth on acetate as sole source of carbon and energy. This Methanosarcina mazei (strain ATCC BAA-159 / DSM 3647 / Goe1 / Go1 / JCM 11833 / OCM 88) (Methanosarcina frisia) protein is Acetyl-CoA decarbonylase/synthase complex subunit gamma 1.